A 234-amino-acid polypeptide reads, in one-letter code: Enolase-phosphatase E1 (234 aa).

The segment at 212–234 is disordered; sequence RPGNYPQPQHSHFKISSFEGLNP.

The protein belongs to the HAD-like hydrolase superfamily. MasA/MtnC family. In terms of assembly, monomer. The cofactor is Mg(2+).

The catalysed reaction is 5-methylsulfanyl-2,3-dioxopentyl phosphate + H2O = 1,2-dihydroxy-5-(methylsulfanyl)pent-1-en-3-one + phosphate. The protein operates within amino-acid biosynthesis; L-methionine biosynthesis via salvage pathway; L-methionine from S-methyl-5-thio-alpha-D-ribose 1-phosphate: step 3/6. It participates in amino-acid biosynthesis; L-methionine biosynthesis via salvage pathway; L-methionine from S-methyl-5-thio-alpha-D-ribose 1-phosphate: step 4/6. In terms of biological role, bifunctional enzyme that catalyzes the enolization of 2,3-diketo-5-methylthiopentyl-1-phosphate (DK-MTP-1-P) into the intermediate 2-hydroxy-3-keto-5-methylthiopentenyl-1-phosphate (HK-MTPenyl-1-P), which is then dephosphorylated to form the acireductone 1,2-dihydroxy-3-keto-5-methylthiopentene (DHK-MTPene). The protein is Enolase-phosphatase E1 of Leptospira interrogans serogroup Icterohaemorrhagiae serovar copenhageni (strain Fiocruz L1-130).